The following is a 208-amino-acid chain: Large ribosomal subunit protein uL3 (208 aa).

Residues 117 to 149 (GFQGAIKRHGQSRGPMAHGSRYHRRPGSMGPVA) form a disordered region.

This sequence belongs to the universal ribosomal protein uL3 family. As to quaternary structure, part of the 50S ribosomal subunit. Forms a cluster with proteins L14 and L19.

In terms of biological role, one of the primary rRNA binding proteins, it binds directly near the 3'-end of the 23S rRNA, where it nucleates assembly of the 50S subunit. The polypeptide is Large ribosomal subunit protein uL3 (Exiguobacterium sp. (strain ATCC BAA-1283 / AT1b)).